We begin with the raw amino-acid sequence, 1945 residues long: Rho GTPase-activating protein 21 (1945 aa).

The tract at residues 26 to 53 is disordered; that stretch reads CEVSKNKDGKDQGEPVSPSEDEPFSWPG. Basic and acidic residues predominate over residues 29–38; the sequence is SKNKDGKDQG. Phosphoserine occurs at positions 42 and 63. The region spanning 56–165 is the PDZ domain; sequence TVMLKRTSQG…TLELSVMPKD (110 aa). 2 disordered regions span residues 210 to 229 and 326 to 365; these read TAQP…QQTS and HQTT…DSPP. Over residues 347–358 the composition is skewed to low complexity; that stretch reads SGHSEGISSSRS. Serine 454 carries the post-translational modification Phosphoserine. Polar residues predominate over residues 499-512; it reads EATATVNSESQIPD. The interval 499–519 is disordered; it reads EATATVNSESQIPDSNGERKQ. Omega-N-methylarginine is present on residues arginine 549 and arginine 569. 2 disordered regions span residues 573 to 647 and 674 to 702; these read PVSQ…RPVN and EVSS…LELP. The segment covering 589–600 has biased composition (polar residues); it reads SNRNFPTTTGVS. A phosphoserine mark is found at serine 610 and serine 619. Positions 674–696 are enriched in polar residues; the sequence is EVSSCLPGTSAKTSPQLSENLGT. At threonine 741 the chain carries Phosphothreonine. Serine 851, serine 856, and serine 875 each carry phosphoserine. 2 disordered regions span residues 852 to 879 and 902 to 921; these read HDQE…YDEG and ITDS…SSSE. A compositionally biased stretch (basic and acidic residues) spans 866–879; it reads HSSKTERSKSYDEG. Phosphotyrosine is present on tyrosine 876. A phosphoserine mark is found at serine 918, serine 920, serine 948, serine 1093, and serine 1109. Residues 924 to 1091 form an interaction with ARF1 and ARF6 region; it reads SDAAREGWLQ…AKSEPKTQSP (168 aa). The PH domain maps to 925-1034; that stretch reads DAAREGWLQF…WIKTIQESSN (110 aa). The segment at 1080–1120 is disordered; that stretch reads LGAKSEPKTQSPHSPKEESERKLLSKDDTSPPKDKGTWRRG. Basic and acidic residues predominate over residues 1093 to 1116; sequence SPKEESERKLLSKDDTSPPKDKGT. One can recognise a Rho-GAP domain in the interval 1141–1333; sequence VRLDDCPPAH…TLIQHHDWFF (193 aa). 4 disordered regions span residues 1373 to 1396, 1412 to 1632, 1649 to 1794, and 1846 to 1945; these read PGDV…SGKD, SRKR…PVFP, ARVS…LGGH, and RTSA…ETPP. Residues 1377 to 1395 are compositionally biased toward low complexity; it reads SDSATSDSAKSKGSWGSGK. Phosphoserine occurs at positions 1412, 1426, and 1427. 2 stretches are compositionally biased toward basic and acidic residues: residues 1435–1457 and 1471–1488; these read FFKK…RESE and SNTK…KIPW. Lysine 1438 is covalently cross-linked (Glycyl lysine isopeptide (Lys-Gly) (interchain with G-Cter in SUMO)). A Phosphothreonine modification is found at threonine 1504. Composition is skewed to low complexity over residues 1531–1556 and 1569–1589; these read SDSG…STSP and TTTS…LDSS. The interval 1579–1848 is interaction with CTNNA1; it reads STTYLTSLDS…WLARERVRTS (270 aa). Positions 1590–1599 are enriched in polar residues; the sequence is RLSPEVQSVA. Positions 1611 to 1621 are enriched in basic and acidic residues; it reads SELVSEGRPVE. Serine 1656 bears the Phosphoserine mark. 2 stretches are compositionally biased toward polar residues: residues 1658-1681 and 1729-1738; these read GSEA…QFSS and STGSLLTPSR. At threonine 1669 the chain carries Phosphothreonine. Phosphoserine is present on serine 1729. Basic and acidic residues predominate over residues 1739–1757; sequence SESEKQEATWKTKIADRLK. Residues 1782-1792 show a composition bias toward basic residues; that stretch reads RKNIKRRHTLG. The segment covering 1871–1882 has biased composition (polar residues); sequence PISTHSPPSQQP. Low complexity predominate over residues 1887–1896; sequence AATSTLASTS. Threonine 1902 is modified (phosphothreonine). Serine 1906 is subject to Phosphoserine. Polar residues predominate over residues 1907-1927; sequence PDQINRESFQNMSQNASSTAN. The segment covering 1932 to 1945 has biased composition (basic and acidic residues); sequence KQSESPDTKAETPP.

As to quaternary structure, interacts with CTNNA1. Interacts with GTP-bound ARF1 and probably ARF6. In terms of processing, sumoylated with SUMO2 and SUMO3 in proliferating lymphocytes.

Its subcellular location is the golgi apparatus membrane. It localises to the cell junction. It is found in the cytoplasmic vesicle membrane. The protein localises to the cytoplasm. The protein resides in the cytoskeleton. In terms of biological role, functions as a GTPase-activating protein (GAP) for RHOA and CDC42. Downstream partner of ARF1 which may control Golgi apparatus structure and function. Also required for CTNNA1 recruitment to adherens junctions. This is Rho GTPase-activating protein 21 from Mus musculus (Mouse).